The primary structure comprises 544 residues: MAASSANKSRPLANFHPTVWGYHFLSYTHEITNQEKVEVDEYKETIRKMLVEAPEGSEQKLVLIDAMQRLGVAYHFHNEIETSIQNIFDAPKQNNNLHIVSLHFRLVRQQGHYMSSDVFKQFTNQDGKFKERLTNDVQGLLSLYEASYLRVRDEEILEEALAFTTTHLKSIVSNMSNNNNSLKVEVSEALTQPIRMTLPRMEARRYISIYENNDAHNHLLLKFAKLDFNMLQKLHQRELSDLTRWWKDLDFANKYPYARDRLVECYFWILGVYFEPKYSRARKMMTKVLKMTSIIDDTFDAYATFDELEPFNDAIQRWDANAIDSIQPYMRPAYQAFLDIYSEMEQVLSKEGKLDRVYYAKNEMKKLVRAYFKETQWLNDCDHIPKYEEHMENSLVSGGYMMIPTTCLVGMEEFISIETFEWLMNDPLIVRASSLIARAMNDIVGHEVEQERGHVASLIECYMKDYGASKQEAYAKFKKDVTNAWKDINKEFFRPTEVPMFVLERVLNLTRAADTLYKEKDAYTNAKGKLKNMINSILIESVKI.

Mg(2+) is bound by residues D296, D300, and E449. The short motif at 296 to 300 is the DDXXD motif element; it reads DDTFD.

The protein belongs to the terpene synthase family. Tpsa subfamily. Mg(2+) serves as cofactor. The cofactor is Mn(2+).

It carries out the reaction (2E,6E)-farnesyl diphosphate = (1E,4E)-germacrene B + diphosphate. It catalyses the reaction (2E)-geranyl diphosphate = terpinolene + diphosphate. The enzyme catalyses (2E)-geranyl diphosphate = limonene + diphosphate. The catalysed reaction is (2E)-geranyl diphosphate = beta-myrcene + diphosphate. It carries out the reaction (2Z,6Z)-farnesyl diphosphate = germacrene A + diphosphate. It catalyses the reaction (2Z,6Z)-farnesyl diphosphate = alpha-humulene + diphosphate. It participates in secondary metabolite biosynthesis; terpenoid biosynthesis. Functionally, sesquiterpene synthase involved in the biosynthesis of volatile compounds. Mediates the conversion of (2E,6E)-farnesyl diphosphate (FPP) into (1E,4E)-germacrene B, but also smaller amounts of germacrene A and C, and of (2Z,6Z)-farnesyl diphosphate ((ZZ)-FPP) into alpha-humulene, germacrene A and germacrene B. Can act with a low efficiency as a monoterpene synthase with geranyl diphosphate (GPP) as substrate, thus producing beta-myrcene, limonene and terpinolene. The protein is Terpene synthase 9 of Solanum habrochaites (Wild tomato).